We begin with the raw amino-acid sequence, 495 residues long: Tubulin epsilon and delta complex protein 1 (495 aa).

Residues 355 to 387 are a coiled coil; the sequence is GGELDLVVRELQALEEELREAAERRRAAWEAKA. The segment at 417 to 440 is disordered; sequence CWERDGGPAQPHGPHRLVRREDGA. Residues 452-480 are a coiled coil; the sequence is IRTLRSQEACLEAVLRRLQGQCRQELARL.

In terms of assembly, interacts with TEDC2. Found in a complex with TEDC1, TEDC2, TUBE1 and TUBD1.

The protein localises to the cell projection. The protein resides in the cilium. Its subcellular location is the cytoplasm. It is found in the cytoskeleton. It localises to the microtubule organizing center. The protein localises to the centrosome. The protein resides in the centriole. Its function is as follows. Acts as a positive regulator of ciliary hedgehog signaling. Required for centriole stability. May play a role in counteracting perturbation of actin filaments, such as after treatment with the actin depolymerizing microbial metabolite Chivosazole F. The sequence is that of Tubulin epsilon and delta complex protein 1 from Homo sapiens (Human).